The following is a 176-amino-acid chain: Peptidyl-tRNA hydrolase (176 aa).

TRNA is bound at residue Tyr-14. The active-site Proton acceptor is the His-19. Residues Tyr-65, Asn-67, and Asn-113 each coordinate tRNA.

Belongs to the PTH family. As to quaternary structure, monomer.

It is found in the cytoplasm. The catalysed reaction is an N-acyl-L-alpha-aminoacyl-tRNA + H2O = an N-acyl-L-amino acid + a tRNA + H(+). In terms of biological role, hydrolyzes ribosome-free peptidyl-tRNAs (with 1 or more amino acids incorporated), which drop off the ribosome during protein synthesis, or as a result of ribosome stalling. Catalyzes the release of premature peptidyl moieties from peptidyl-tRNA molecules trapped in stalled 50S ribosomal subunits, and thus maintains levels of free tRNAs and 50S ribosomes. This chain is Peptidyl-tRNA hydrolase, found in Phytoplasma mali (strain AT).